The chain runs to 209 residues: 3-dehydroquinate dehydratase (209 aa).

3-dehydroquinate contacts are provided by residues S6, 25–27 (ELR), and R55. H109 serves as the catalytic Proton donor/acceptor. The Schiff-base intermediate with substrate role is filled by K134. 3-dehydroquinate is bound by residues R172 and Q195.

It belongs to the type-I 3-dehydroquinase family. Homodimer.

The enzyme catalyses 3-dehydroquinate = 3-dehydroshikimate + H2O. It participates in metabolic intermediate biosynthesis; chorismate biosynthesis; chorismate from D-erythrose 4-phosphate and phosphoenolpyruvate: step 3/7. Its function is as follows. Involved in the third step of the chorismate pathway, which leads to the biosynthesis of aromatic amino acids. Catalyzes the cis-dehydration of 3-dehydroquinate (DHQ) and introduces the first double bond of the aromatic ring to yield 3-dehydroshikimate. The sequence is that of 3-dehydroquinate dehydratase from Methanoregula boonei (strain DSM 21154 / JCM 14090 / 6A8).